We begin with the raw amino-acid sequence, 560 residues long: Dimethylaniline monooxygenase [N-oxide-forming] 4 (560 aa).

FAD is bound by residues 9-13, Glu-32, and 40-41; these read GAGVS and LW. Residues 60–61 and 195–198 each bind NADP(+); these read TN and TGGD. The chain crosses the membrane as a helical span at residues 510-530; the sequence is LSHYLIAWGAPVLLVSLLLIY.

The protein belongs to the FMO family. FAD serves as cofactor.

The protein localises to the microsome membrane. The protein resides in the endoplasmic reticulum membrane. It catalyses the reaction N,N-dimethylaniline + NADPH + O2 + H(+) = N,N-dimethylaniline N-oxide + NADP(+) + H2O. Its function is as follows. This protein is involved in the oxidative metabolism of a variety of xenobiotics such as drugs and pesticides. The protein is Dimethylaniline monooxygenase [N-oxide-forming] 4 (Fmo4) of Mus musculus (Mouse).